The sequence spans 376 residues: Cytochrome b (376 aa).

The next 4 membrane-spanning stretches (helical) occupy residues 28 to 48 (YGFLLGIIFFIQILTGVFLAS), 72 to 94 (WCFRYMHATGASLVFFLTYLHIL), 107 to 127 (SWISGLIIFALFIVTAFIGYV), and 169 to 189 (FFVLHFILPFVALCIVFIHIF). Heme b is bound by residues H78 and H92. Heme b contacts are provided by H173 and H187. Position 192 (H192) interacts with a ubiquinone. Transmembrane regions (helical) follow at residues 214 to 234 (LLSLDVKGFNNILILFLIQSI), 274 to 294 (IPSKNAGLVIVVASLQLLFLL), 317 to 337 (VPIIWFMCSFYALLWIGCQLP), and 340 to 360 (IFILYGRLFIILFFSSGLFAL).

It belongs to the cytochrome b family. As to quaternary structure, the main subunits of complex b-c1 are: cytochrome b, cytochrome c1 and the Rieske protein. The cofactor is heme b.

The protein localises to the mitochondrion inner membrane. Its function is as follows. Component of the ubiquinol-cytochrome c reductase complex (complex III or cytochrome b-c1 complex) that is part of the mitochondrial respiratory chain. The b-c1 complex mediates electron transfer from ubiquinol to cytochrome c. Contributes to the generation of a proton gradient across the mitochondrial membrane that is then used for ATP synthesis. The sequence is that of Cytochrome b (MT-CYB) from Plasmodium chabaudi.